The chain runs to 247 residues: Putative methyltransferase GWCH70_2453 (247 aa).

This sequence belongs to the methyltransferase superfamily.

In terms of biological role, may be a S-adenosyl-L-methionine (SAM)-dependent methyltransferase. The protein is Putative methyltransferase GWCH70_2453 of Geobacillus sp. (strain WCH70).